Reading from the N-terminus, the 485-residue chain is GTPase Obg (485 aa).

The Obg domain occupies 2-159; sequence PRFVDRVVIH…RDLTLELKTV (158 aa). The OBG-type G domain occupies 160–341; that stretch reads ADVGLIGFPS…LIFALWEMVK (182 aa). Residues 166–173, 191–195, 212–215, 292–295, and 322–324 contribute to the GTP site; these read GFPSAGKS, FTTLV, DVPG, NKID, and STV. The Mg(2+) site is built by Ser-173 and Thr-193. The OCT domain occupies 359-437; sequence PIPVDESGFT…IGDVTFDWEP (79 aa). The interval 450 to 485 is disordered; it reads RGTDIRLEQTDRVGAAERKAARRERRQPGESGGEDS. A compositionally biased stretch (basic and acidic residues) spans 452–468; sequence TDIRLEQTDRVGAAERK.

This sequence belongs to the TRAFAC class OBG-HflX-like GTPase superfamily. OBG GTPase family. As to quaternary structure, monomer. Requires Mg(2+) as cofactor.

It localises to the cytoplasm. Its function is as follows. An essential GTPase which binds GTP, GDP and possibly (p)ppGpp with moderate affinity, with high nucleotide exchange rates and a fairly low GTP hydrolysis rate. Plays a role in control of the cell cycle, stress response, ribosome biogenesis and in those bacteria that undergo differentiation, in morphogenesis control. In Mycolicibacterium smegmatis (strain ATCC 700084 / mc(2)155) (Mycobacterium smegmatis), this protein is GTPase Obg.